Here is an 87-residue protein sequence, read N- to C-terminus: Large ribosomal subunit protein eL31 (87 aa).

This sequence belongs to the eukaryotic ribosomal protein eL31 family.

This chain is Large ribosomal subunit protein eL31 (rpl31e), found in Methanocaldococcus jannaschii (strain ATCC 43067 / DSM 2661 / JAL-1 / JCM 10045 / NBRC 100440) (Methanococcus jannaschii).